Reading from the N-terminus, the 244-residue chain is Non-structural protein 3 (244 aa).

Belongs to the aquareoviridae NS3 protein family.

This chain is Non-structural protein 3 (S11), found in Notemigonus crysoleucas (Golden shiner).